The following is a 447-amino-acid chain: Na(+)-translocating NADH-quinone reductase subunit A (447 aa).

Belongs to the NqrA family. In terms of assembly, composed of six subunits; NqrA, NqrB, NqrC, NqrD, NqrE and NqrF.

The enzyme catalyses a ubiquinone + n Na(+)(in) + NADH + H(+) = a ubiquinol + n Na(+)(out) + NAD(+). NQR complex catalyzes the reduction of ubiquinone-1 to ubiquinol by two successive reactions, coupled with the transport of Na(+) ions from the cytoplasm to the periplasm. NqrA to NqrE are probably involved in the second step, the conversion of ubisemiquinone to ubiquinol. This chain is Na(+)-translocating NADH-quinone reductase subunit A, found in Tolumonas auensis (strain DSM 9187 / NBRC 110442 / TA 4).